A 137-amino-acid chain; its full sequence is Cellular retinoic acid-binding protein 1 (137 aa).

Positions 21–31 (KALGVNAMLRK) match the Nuclear localization signal motif. Residue 132–134 (RIY) participates in all-trans-retinoate binding.

Belongs to the calycin superfamily. Fatty-acid binding protein (FABP) family.

Its subcellular location is the cytoplasm. Cytosolic CRABPs may regulate the access of retinoic acid to the nuclear retinoic acid receptors. In Homo sapiens (Human), this protein is Cellular retinoic acid-binding protein 1 (CRABP1).